Reading from the N-terminus, the 40-residue chain is Photosystem II reaction center protein J (40 aa).

The residue at position 2 (Met-2) is an N-acetylmethionine. Residues 2–11 (MSEGGRIPLW) are Cytoplasmic-facing. The helical transmembrane segment at 12–26 (IVATVAGMGVIVIVG) threads the bilayer. The Lumenal portion of the chain corresponds to 27–40 (LFFYGAYAGLGSSL).

It belongs to the PsbJ family. As to quaternary structure, PSII is composed of 1 copy each of membrane proteins PsbA, PsbB, PsbC, PsbD, PsbE, PsbF, PsbH, PsbI, PsbJ, PsbK, PsbL, PsbM, PsbT, PsbX, PsbY, PsbZ, Psb30/Ycf12, peripheral proteins PsbO, CyanoQ (PsbQ), PsbU, PsbV and a large number of cofactors. It forms dimeric complexes. PSII binds multiple chlorophylls, carotenoids and specific lipids. is required as a cofactor.

It localises to the cellular thylakoid membrane. Functionally, one of the components of the core complex of photosystem II (PSII). PSII is a light-driven water:plastoquinone oxidoreductase that uses light energy to abstract electrons from H(2)O, generating O(2) and a proton gradient subsequently used for ATP formation. It consists of a core antenna complex that captures photons, and an electron transfer chain that converts photonic excitation into a charge separation. Its function is as follows. May play a regulatory role in PSII biogenesis. In Thermosynechococcus vestitus (strain NIES-2133 / IAM M-273 / BP-1), this protein is Photosystem II reaction center protein J.